We begin with the raw amino-acid sequence, 126 residues long: MSFIPHDLGRQGEHTAVTFLIEKGYRILQRNYRHRRNEIDIIALDRRTLCFIEVKTRSSASKGHPLEAVTPEKQKEIIRAATAYLSAYPSPEPDCRFDVIAIIAHDFTNGRIREFKLEHITNAFMT.

It belongs to the UPF0102 family.

This chain is UPF0102 protein Cphamn1_0017, found in Chlorobium phaeobacteroides (strain BS1).